The chain runs to 303 residues: MKVIFMGTPEFAVPTLKKLIAHHEVTAVFTQQPKAKGRGLSLAQSPIHQLACEHQIPVYTPSTLRNDKTINLINKVNADIIVVIAYGFIVPKAILDAKKYGCLNIHPSDLPRHRGAAPLQRTIIEGDKTSSVCIMRMDTGLDTGDILMKEDFDLEERTTLKELHNKCANLGAELLINTLVNIDNIVPIKQSSDGITYAHKLTKQEGKINWQDSAYSIDCKIRGMNPWPGVYFSYDDKIIKILEAEYLNVDHHFTPGTVISDKLEIACGSGILQVKKLQQESKKALNIEEFLLGTRILKATVLK.

108–111 is a (6S)-5,6,7,8-tetrahydrofolate binding site; sequence SDLP.

It belongs to the Fmt family.

The enzyme catalyses L-methionyl-tRNA(fMet) + (6R)-10-formyltetrahydrofolate = N-formyl-L-methionyl-tRNA(fMet) + (6S)-5,6,7,8-tetrahydrofolate + H(+). Functionally, attaches a formyl group to the free amino group of methionyl-tRNA(fMet). The formyl group appears to play a dual role in the initiator identity of N-formylmethionyl-tRNA by promoting its recognition by IF2 and preventing the misappropriation of this tRNA by the elongation apparatus. This is Methionyl-tRNA formyltransferase from Rickettsia canadensis (strain McKiel).